Reading from the N-terminus, the 783-residue chain is Polyadenylate-binding protein, cytoplasmic and nuclear (783 aa).

The disordered stretch occupies residues 16–65 (DLGNTSLGGGDNRAAPAINTNVAPGEYQTADPDTAGPTPSSAAPHPQSSA). A compositionally biased stretch (low complexity) spans 54-65 (PSSAAPHPQSSA). 4 consecutive RRM domains span residues 65–143 (ASLY…WSQR), 153–230 (GNVF…YHIP), 246–323 (TNIY…RAQK), and 349–471 (VNLY…LAQR). Disordered regions lie at residues 381–428 (MRDA…KGDR), 596–671 (AAAL…AAGG), and 752–783 (VKSQ…EEKA). The span at 396–406 (GKDKENKKEGE) shows a compositional bias: basic and acidic residues. The span at 407-416 (QAAEAEGEAE) shows a compositional bias: acidic residues. Residues 417-428 (GAEKKTEKKGDR) are compositionally biased toward basic and acidic residues. Over residues 601–614 (NGRGGPGGPGGRGM) the composition is skewed to gly residues. Low complexity predominate over residues 630-641 (AGFPPNGRPQNG). Residues 642–655 (NMGGRGGPGRGGNF) show a composition bias toward gly residues. The span at 656 to 671 (AAGRGAPPAGPLAAGG) shows a compositional bias: low complexity. One can recognise a PABC domain in the interval 676-753 (SSLLQSQLTA…AMAVYDEYVK (78 aa)). Over residues 770-783 (EAEKPKEEKAEEKA) the composition is skewed to basic and acidic residues.

Belongs to the polyadenylate-binding protein type-1 family.

It localises to the cytoplasm. It is found in the nucleus. In terms of biological role, binds the poly(A) tail of mRNA. Appears to be an important mediator of the multiple roles of the poly(A) tail in mRNA biogenesis, stability and translation. In the nucleus, involved in both mRNA cleavage and polyadenylation. Is also required for efficient mRNA export to the cytoplasm. Acts in concert with a poly(A)-specific nuclease (PAN) to affect poly(A) tail shortening, which may occur concomitantly with either nucleocytoplasmic mRNA transport or translational initiation. In the cytoplasm, stimulates translation initiation and regulates mRNA decay through translation termination-coupled poly(A) shortening, probably mediated by PAN. The chain is Polyadenylate-binding protein, cytoplasmic and nuclear (PAB1) from Chaetomium globosum (strain ATCC 6205 / CBS 148.51 / DSM 1962 / NBRC 6347 / NRRL 1970) (Soil fungus).